Here is a 137-residue protein sequence, read N- to C-terminus: Probable DNA-directed RNA polymerases I, II, and III subunit RPABC2 (137 aa).

Acidic residues-rich tracts occupy residues M1 to E27 and N34 to D43. A disordered region spans residues M1–D43.

The protein belongs to the archaeal Rpo6/eukaryotic RPB6 RNA polymerase subunit family. In terms of assembly, component of the RNA polymerase I (Pol I), RNA polymerase II (Pol II) and RNA polymerase III (Pol III) complexes consisting of at least 13, 12 and 17 subunits, respectively.

It localises to the nucleus. In terms of biological role, DNA-dependent RNA polymerases catalyze the transcription of DNA into RNA using the four ribonucleoside triphosphates as substrates. Common component of RNA polymerases I, II and III which synthesize ribosomal RNA precursors, mRNA precursors and many functional non-coding RNAs, and small RNAs, such as 5S rRNA and tRNAs, respectively. Pol II is the central component of the basal RNA polymerase II transcription machinery. Pols are composed of mobile elements that move relative to each other. In Pol II, RPB6 is part of the clamp element and together with parts of RPB1 and RPB2 forms a pocket to which the RPB4-RPB7 subcomplex binds. The chain is Probable DNA-directed RNA polymerases I, II, and III subunit RPABC2 (rpb-6) from Caenorhabditis elegans.